Consider the following 492-residue polypeptide: NADH-quinone oxidoreductase subunit N 2 (492 aa).

Transmembrane regions (helical) follow at residues 16 to 36 (ILPE…DALI), 44 to 64 (PLGY…ACQA), 87 to 107 (FSLF…LVSF), 118 to 138 (GEYY…TSAT), 140 to 160 (LVLI…LAAM), 175 to 195 (FLLG…IFGA), 216 to 236 (PIIY…VAAA), 250 to 270 (PSPI…AVLL), 282 to 302 (FWIV…GALV), 309 to 329 (LLAY…AAAK), 333 to 353 (ISAA…AFAV), 381 to 401 (AAIL…GGFF), 416 to 438 (VWLT…RIIV), and 455 to 475 (PFGL…LGVL).

Belongs to the complex I subunit 2 family. NDH-1 is composed of 14 different subunits. Subunits NuoA, H, J, K, L, M, N constitute the membrane sector of the complex.

The protein localises to the cell inner membrane. It carries out the reaction a quinone + NADH + 5 H(+)(in) = a quinol + NAD(+) + 4 H(+)(out). NDH-1 shuttles electrons from NADH, via FMN and iron-sulfur (Fe-S) centers, to quinones in the respiratory chain. The immediate electron acceptor for the enzyme in this species is believed to be ubiquinone. Couples the redox reaction to proton translocation (for every two electrons transferred, four hydrogen ions are translocated across the cytoplasmic membrane), and thus conserves the redox energy in a proton gradient. This is NADH-quinone oxidoreductase subunit N 2 from Koribacter versatilis (strain Ellin345).